The primary structure comprises 296 residues: Ribonuclease HIII (296 aa).

One can recognise an RNase H type-2 domain in the interval 81–296 (QAMIGTDEVG…TQKAKQLLER (216 aa)). The a divalent metal cation site is built by Asp-87, Glu-88, and Asp-190.

This sequence belongs to the RNase HII family. RnhC subfamily. Mn(2+) is required as a cofactor. It depends on Mg(2+) as a cofactor.

The protein localises to the cytoplasm. It catalyses the reaction Endonucleolytic cleavage to 5'-phosphomonoester.. Its function is as follows. Endonuclease that specifically degrades the RNA of RNA-DNA hybrids. The chain is Ribonuclease HIII from Streptococcus gordonii (strain Challis / ATCC 35105 / BCRC 15272 / CH1 / DL1 / V288).